The sequence spans 571 residues: MMTILLQHTHLKNRLMPFLLALFLAGCTTFLGGGSASLLQSDANANSDFYMNKVYQAQNLEEQHTYKLLAARVLVTENKIPQAQALLNELTTLTDEQVLDKSIIEAHIAAVKQQNTVADTQLKHINLAQLSRSQLARYYDVAARIAENRYDAIEAVKARIQIDQLLSDVSRKQANIDRTWSLLRNANRGVINNTVAEGNIALGGWLALTRAYNQNLSNPAQLSQAIQQWKTAYPTHPAAYLFPTELQGLFNFQQTQFSQVALLLPLSGNAQVIGNTIKAGFDAAKDNSATQVQVFDTAATPVDVIFDQVKQAGIRTVVGPLLKQNVDMLLNNAQLVQGLDVLTLNSTSNERAIGQLCYYGLSPEDEAESAANKMWKDGIRTPSVFVPQNDLGRRTASAFNVRWQQLAATDANIRFYNLPADITYTLDDQNTSGVYIVAMSDQLAEIKTTIDNSGRTTKLYASSRSNSANNAPEYRLLMEGLQFSDIPFFKDVTSNQYKKIEKLTKGDFSLMRLYAMGADAWLLINHFNELRQVPGYNIDGLTGKLSAGANCNIERDMTWFQYQSGGIISLN.

A signal peptide spans 1–26 (MMTILLQHTHLKNRLMPFLLALFLAG). Residue cysteine 27 is the site of N-palmitoyl cysteine attachment. Residue cysteine 27 is the site of S-diacylglycerol cysteine attachment.

This sequence belongs to the LpoA family. As to quaternary structure, interacts with PBP1a.

Its subcellular location is the cell outer membrane. Regulator of peptidoglycan synthesis that is essential for the function of penicillin-binding protein 1A (PBP1a). This Pasteurella multocida (strain Pm70) protein is Penicillin-binding protein activator LpoA.